Reading from the N-terminus, the 145-residue chain is GYQFDKGYISPYFVTNPETMEAVLEDAFILIVEKKVSNVRELLPILEQVAQTGKPLLIIAEDVEGEALATLVVNKLRGTLSVAAVKAPGFGDRRKEMLKDIAAVTGGTVISEELGFKLENATLSMLGRAERVRITKDETTIVGGK.

This sequence belongs to the chaperonin (HSP60) family. As to quaternary structure, forms a cylinder of 14 subunits composed of two heptameric rings stacked back-to-back. Interacts with the co-chaperonin GroES.

The protein resides in the cytoplasm. The catalysed reaction is ATP + H2O + a folded polypeptide = ADP + phosphate + an unfolded polypeptide.. Together with its co-chaperonin GroES, plays an essential role in assisting protein folding. The GroEL-GroES system forms a nano-cage that allows encapsulation of the non-native substrate proteins and provides a physical environment optimized to promote and accelerate protein folding. This chain is Chaperonin GroEL, found in Thermus thermophilus.